A 498-amino-acid polypeptide reads, in one-letter code: Aspartyl aminopeptidase (498 aa).

His-91 is a binding site for Zn(2+). His-166 contacts substrate. Asp-274 contributes to the Zn(2+) binding site. Glu-311 contacts substrate. 2 residues coordinate Zn(2+): Glu-312 and Asp-363. 4 residues coordinate substrate: Asp-363, His-366, Lys-391, and Tyr-398. Residue His-463 participates in Zn(2+) binding.

Belongs to the peptidase M18 family. As to quaternary structure, tetrahedron-shaped homododecamer built from six homodimers. The cofactor is Zn(2+). In terms of processing, the N-terminus is blocked.

The enzyme catalyses Release of an N-terminal aspartate or glutamate from a peptide, with a preference for aspartate.. Inhibited by zinc. Stimulated by calcium and bacitracin. The polypeptide is Aspartyl aminopeptidase (dapA) (Aspergillus oryzae (strain ATCC 42149 / RIB 40) (Yellow koji mold)).